Here is a 512-residue protein sequence, read N- to C-terminus: MLTLMTLIVLVPLLLFLFPHLLLRRQMLLKPYPPGPKGLPVIGNILMMNQFNHRGLAKLSRIYGGLLHLRLGFSHIFVVSSPDIARQVLQVQDHVFSNRPTTIAIRYLTYGGSDLAFCNYGPFWRRMRKLYVMMLFSRKRAESWVSVDEEVHKSVRLVASNVGKPLNICKLAFSLSRDITFRAAFGSSSSTSDESRLDEFLEIIQEFSKLFGEFNVADYVPSWLSWIDPQGINGRVEKARKSLDGFIESVIDDHLHKKKREHDNVDEETDMVDQLLAFYEEEVKVNNSVTKINLDNIKGIIMDVMFGGTETVALAIEWVLTEILRSPENMKRVQDELTSVVGLDRWRVEDTHLEKLTFLKCILKETLRLHPPFPLLLHETVKDTEISGYFIPKGSRVMVNTYALGRDPNSWSDPESFNPGRFLNPIAPDLKGNNFEFVPFGSGRRSCPGMQLGLYAFELAVAHLLHCFTWSLPDGMNPGDVDTVEGPGLTVPKAIPLVAVPTTRLLCPIVVS.

A helical transmembrane segment spans residues 7–24; the sequence is LIVLVPLLLFLFPHLLLR. Position 447 (Cys447) interacts with heme.

This sequence belongs to the cytochrome P450 family. Heme is required as a cofactor. In terms of tissue distribution, expressed in seedlings, roots, stems and inflorescence nodes. Low or no expression in leaves, flowers, seeds and lignifying tissue.

The protein localises to the membrane. In terms of biological role, cytochrome P450 involved in the production of catechol-substituted substrates needed for the arabidopyrones biosynthesis. Converts p-coumaraldehyde into caffealdehyde. The sequence is that of Cytochrome P450 84A4 (CYP84A4) from Arabidopsis thaliana (Mouse-ear cress).